A 155-amino-acid polypeptide reads, in one-letter code: Small ribosomal subunit protein bS6 (155 aa).

A disordered region spans residues 94–155; it reads EKHEEGPSAM…RPRRPREDRV (62 aa).

This sequence belongs to the bacterial ribosomal protein bS6 family.

Its function is as follows. Binds together with bS18 to 16S ribosomal RNA. This is Small ribosomal subunit protein bS6 from Rhizobium leguminosarum bv. trifolii (strain WSM2304).